The following is a 187-amino-acid chain: Threonylcarbamoyl-AMP synthase (187 aa).

A YrdC-like domain is found at 4–187 (QSTIAAAITC…DAMNGKVFRG (184 aa)).

Belongs to the SUA5 family. TsaC subfamily.

It localises to the cytoplasm. The enzyme catalyses L-threonine + hydrogencarbonate + ATP = L-threonylcarbamoyladenylate + diphosphate + H2O. Required for the formation of a threonylcarbamoyl group on adenosine at position 37 (t(6)A37) in tRNAs that read codons beginning with adenine. Catalyzes the conversion of L-threonine, HCO(3)(-)/CO(2) and ATP to give threonylcarbamoyl-AMP (TC-AMP) as the acyladenylate intermediate, with the release of diphosphate. This is Threonylcarbamoyl-AMP synthase from Pseudoalteromonas translucida (strain TAC 125).